Reading from the N-terminus, the 308-residue chain is Aspartate carbamoyltransferase catalytic subunit (308 aa).

Carbamoyl phosphate contacts are provided by Arg57 and Thr58. L-aspartate is bound at residue Lys86. Residues Arg107, His135, and Gln138 each coordinate carbamoyl phosphate. L-aspartate-binding residues include Arg168 and Arg228. Carbamoyl phosphate is bound by residues Leu267 and Pro268.

It belongs to the aspartate/ornithine carbamoyltransferase superfamily. ATCase family. As to quaternary structure, heterododecamer (2C3:3R2) of six catalytic PyrB chains organized as two trimers (C3), and six regulatory PyrI chains organized as three dimers (R2).

It carries out the reaction carbamoyl phosphate + L-aspartate = N-carbamoyl-L-aspartate + phosphate + H(+). Its pathway is pyrimidine metabolism; UMP biosynthesis via de novo pathway; (S)-dihydroorotate from bicarbonate: step 2/3. Catalyzes the condensation of carbamoyl phosphate and aspartate to form carbamoyl aspartate and inorganic phosphate, the committed step in the de novo pyrimidine nucleotide biosynthesis pathway. This Leptospira borgpetersenii serovar Hardjo-bovis (strain JB197) protein is Aspartate carbamoyltransferase catalytic subunit.